The primary structure comprises 334 residues: Ornithine carbamoyltransferase, catabolic (334 aa).

Carbamoyl phosphate contacts are provided by residues 57-60 (STRT), Gln84, Arg108, and 135-138 (HPTQ). L-ornithine is bound by residues Asn168, Asp232, and 236 to 237 (SM). Residues 274-275 (CL) and Arg320 contribute to the carbamoyl phosphate site.

This sequence belongs to the aspartate/ornithine carbamoyltransferase superfamily. OTCase family.

Its subcellular location is the cytoplasm. It catalyses the reaction carbamoyl phosphate + L-ornithine = L-citrulline + phosphate + H(+). The protein operates within amino-acid degradation; L-arginine degradation via ADI pathway; carbamoyl phosphate from L-arginine: step 2/2. Reversibly catalyzes the transfer of the carbamoyl group from carbamoyl phosphate (CP) to the N(epsilon) atom of ornithine (ORN) to produce L-citrulline. This is Ornithine carbamoyltransferase, catabolic (arcB) from Rhizobium meliloti (strain 1021) (Ensifer meliloti).